The primary structure comprises 295 residues: GATA zinc finger domain-containing protein 23 (295 aa).

A compositionally biased stretch (low complexity) spans 115–126 (ASTSKTATSKNV). The segment at 115–240 (ASTSKTATSK…KRGRPSKIQP (126 aa)) is disordered. Over residues 127–145 (ISNIENNTNKSQPLESNDL) the composition is skewed to polar residues. Positions 146-163 (TPPSSKSSNSSPSTSPSK) are enriched in low complexity. Residues 164-174 (RVSKSKTRVTK) are compositionally biased toward basic residues. The segment covering 181-227 (STSSSGETENLTTTSTADTTATTDTADTTDGTNTRTSNTSSDDTTTE) has biased composition (low complexity). The a.T hook DNA-binding region spans 229-241 (TKKRGRPSKIQPD). The GATA-type zinc-finger motif lies at 243 to 270 (CYVCRRTFTSYWRKGIFNDQNEDLCNPC).

In Dictyostelium discoideum (Social amoeba), this protein is GATA zinc finger domain-containing protein 23 (gtaW).